Reading from the N-terminus, the 223-residue chain is Deoxyribose-phosphate aldolase (223 aa).

Asp92 serves as the catalytic Proton donor/acceptor. The active-site Schiff-base intermediate with acetaldehyde is the Lys154. Lys182 serves as the catalytic Proton donor/acceptor.

Belongs to the DeoC/FbaB aldolase family. DeoC type 1 subfamily.

It is found in the cytoplasm. The enzyme catalyses 2-deoxy-D-ribose 5-phosphate = D-glyceraldehyde 3-phosphate + acetaldehyde. The protein operates within carbohydrate degradation; 2-deoxy-D-ribose 1-phosphate degradation; D-glyceraldehyde 3-phosphate and acetaldehyde from 2-deoxy-alpha-D-ribose 1-phosphate: step 2/2. Its function is as follows. Catalyzes a reversible aldol reaction between acetaldehyde and D-glyceraldehyde 3-phosphate to generate 2-deoxy-D-ribose 5-phosphate. This Haemophilus influenzae (strain PittEE) protein is Deoxyribose-phosphate aldolase.